We begin with the raw amino-acid sequence, 313 residues long: D-alanine--D-alanine ligase (313 aa).

Positions 104 to 304 constitute an ATP-grasp domain; the sequence is KQALVPHGIP…YSDLVEAIIA (201 aa). 130–187 contributes to the ATP binding site; that stretch reads PLPRPYVLKPVNEGSSVGVAIVTAEGNYGSPISAASKGPWQEFDQLLAEPFIRGRELT. Mg(2+) contacts are provided by Asp-255, Glu-271, and Asn-273.

It belongs to the D-alanine--D-alanine ligase family. Mg(2+) serves as cofactor. It depends on Mn(2+) as a cofactor.

Its subcellular location is the cytoplasm. It carries out the reaction 2 D-alanine + ATP = D-alanyl-D-alanine + ADP + phosphate + H(+). The protein operates within cell wall biogenesis; peptidoglycan biosynthesis. Cell wall formation. In Novosphingobium aromaticivorans (strain ATCC 700278 / DSM 12444 / CCUG 56034 / CIP 105152 / NBRC 16084 / F199), this protein is D-alanine--D-alanine ligase.